We begin with the raw amino-acid sequence, 607 residues long: Polyphenol oxidase, chloroplastic (607 aa).

Residues 1 to 103 constitute a chloroplast transit peptide; it reads MASLPWSLTT…LGATKPLAFG (103 aa). The disordered stretch occupies residues 39–73; it reads RNRSRRFAPSKVSCNSANGDPNSDSTSDVRETSSG. Residues 50 to 64 are compositionally biased toward polar residues; the sequence is VSCNSANGDPNSDST. 2 disulfide bridges follow: C114–C129 and C128–C191. Cu cation-binding residues include H190, H211, H220, H342, H346, and H375. A cross-link (2'-(S-cysteinyl)-histidine (Cys-His)) is located at residues 194 to 211; it reads CQGAYDQVGYTDLELQVH.

It belongs to the tyrosinase family. Requires Cu(2+) as cofactor.

Its subcellular location is the plastid. The protein localises to the chloroplast thylakoid lumen. The enzyme catalyses 2 catechol + O2 = 2 1,2-benzoquinone + 2 H2O. In terms of biological role, catalyzes the oxidation of mono- and o-diphenols to o-diquinones. The polypeptide is Polyphenol oxidase, chloroplastic (Vitis vinifera (Grape)).